Reading from the N-terminus, the 249-residue chain is Undecaprenyl-diphosphatase (249 aa).

Helical transmembrane passes span 11 to 31 (GLTEFLPISSSGHLAIFTAIF), 35 to 55 (PDVGYFAFLHLATFLAVLIFV), 80 to 100 (LVLSTIPAVIVGLCFGDFIES), 101 to 121 (VFSSTFLIGVFLSITGILMLL), 135 to 155 (IPYLDAMIVGIFQAFSVLPGI), 175 to 195 (AVKYSFLMGLPVTFGAGILEL), 202 to 222 (AEQLFGFVISFLTGLLGLYLV), and 226 to 246 (VIGGKLKIFGYYCFLASFFVL).

This sequence belongs to the UppP family.

The protein resides in the cell membrane. It catalyses the reaction di-trans,octa-cis-undecaprenyl diphosphate + H2O = di-trans,octa-cis-undecaprenyl phosphate + phosphate + H(+). In terms of biological role, catalyzes the dephosphorylation of undecaprenyl diphosphate (UPP). This is Undecaprenyl-diphosphatase from Methanococcus maripaludis (strain C5 / ATCC BAA-1333).